We begin with the raw amino-acid sequence, 435 residues long: Putative pyridoxal-phosphate dependent protein F13B12.4 (435 aa).

The N-terminal stretch at 1–18 (MKLLLLALFLSISASCLA) is a signal peptide. Asn-79 carries N-linked (GlcNAc...) asparagine glycosylation. Residue Lys-89 is modified to N6-(pyridoxal phosphate)lysine. A pyridoxal 5'-phosphate-binding site is contributed by 235–239 (GTGGT). N-linked (GlcNAc...) asparagine glycosylation occurs at Asn-277. A pyridoxal 5'-phosphate-binding site is contributed by Ser-342.

The protein belongs to the cysteine synthase/cystathionine beta-synthase family. Highly divergent.

This is Putative pyridoxal-phosphate dependent protein F13B12.4 from Caenorhabditis elegans.